The sequence spans 727 residues: Testis anion transporter 1 (727 aa).

Residues 1–23 (MLTIFPFLEWMCMYRLKDWLLGD) are Cytoplasmic-facing. A helical transmembrane segment spans residues 24-44 (LLAGISVGLVQVPQGLTLSLL). Over 45–47 (ARQ) the chain is Extracellular. The chain crosses the membrane as a helical span at residues 48–68 (LIPPLNIAYAAFCSSVIYVIF). The Cytoplasmic portion of the chain corresponds to 69-74 (GSCHQM). A helical membrane pass occupies residues 75–95 (SIGSFFLVSALLINVLKISPL). The Extracellular segment spans residues 96–130 (NNGHLVMGSFLKDEFSAPSYLMGYNKSLSVVATTT). An N-linked (GlcNAc...) asparagine glycan is attached at asparagine 120. The helical transmembrane segment at 131–151 (FLTGIIQLIMGVLGLGFIATY) threads the bilayer. Over 152–160 (LPESAMSAY) the chain is Cytoplasmic. The chain crosses the membrane as a helical span at residues 161-181 (LAAVALHIMLSQLTCIFGIMI). Topologically, residues 182–198 (SFHAGPISFFYDIINYC) are extracellular. Residues 199–219 (VALPKANSTSILLFLTVVVAL) traverse the membrane as a helical segment. Topologically, residues 220-235 (RINKCIRISFNQYPIE) are cytoplasmic. The helical transmembrane segment at 236–256 (FPMELFLIIGFTVIGNKITMA) threads the bilayer. Topologically, residues 257 to 283 (TETSQTLIDMIPYSFLFPVTPDFSVLP) are extracellular. Residues 284–304 (KIILQAISLSLVSSFLLVFLG) traverse the membrane as a helical segment. Residues 305 to 360 (KKIASLHNYSVNSNQDLIAIGLCNVVSSFFRSCVFTGAVARTIIQDKSGGRQQFAS) lie on the Cytoplasmic side of the membrane. Residues 361–381 (LVGAGVMLLLMVKMGHFFYAL) form a helical membrane-spanning segment. Residues 382-383 (PN) lie on the Extracellular side of the membrane. Residues 384–404 (AVLAGIILSNVVPYLETISNL) form a helical membrane-spanning segment. Topologically, residues 405–424 (PSLWRQDQYDCALWMMTFSS) are cytoplasmic. A helical transmembrane segment spans residues 425–445 (SIFLGLDIGLIISVVSAFFIT). Residues 446-727 (SVRSHRAKIL…LPSFHLQHIF (282 aa)) are Extracellular-facing. The STAS domain maps to 471 to 722 (DYREIITIPG…NSLSRLPSFH (252 aa)). The interaction with RACGAP1 stretch occupies residues 592–727 (TVSSMSQKNQ…LPSFHLQHIF (136 aa)).

The protein belongs to the SLC26A/SulP transporter (TC 2.A.53) family. In terms of assembly, interacts with RACGAP1. Interacts with CFTR; stimulates anion transport activity of CFTR. Post-translationally, N-glycosylated.

The protein localises to the membrane. The catalysed reaction is sulfate(out) + chloride(in) = sulfate(in) + chloride(out). The enzyme catalyses oxalate(in) + chloride(out) = oxalate(out) + chloride(in). Its function is as follows. Antiporter that mediates the exchange of sulfate and oxalate against chloride ions across a membrane. Stimulates anion transport activity of CFTR. May cooperate with CFTR in the regulation of chloride and bicarbonate ions fluxes required for activation of the ADCY10/PKA pathway during sperm motility and sperm capacitation. May play a role in sperm tail differentiation and motility and hence male fertility. This Macaca fascicularis (Crab-eating macaque) protein is Testis anion transporter 1.